A 116-amino-acid chain; its full sequence is Spexin (116 aa).

Residues 1 to 26 form the signal peptide; that stretch reads MKGPSILAVAALALLLVLSVLENSSG. Residues 27–35 constitute a propeptide that is removed on maturation; the sequence is APQRLSEKR. The residue at position 49 (Q49) is a Glutamine amide. 2 propeptides span residues 50–116 and 74–116; these read GHRF…RFYW and PNLQ…RFYW. The segment covering 56 to 73 has biased composition (basic and acidic residues); the sequence is DQSRRKELADRPPPERRN. Positions 56–75 are disordered; that stretch reads DQSRRKELADRPPPERRNPN.

The protein belongs to the spexin family. As to expression, widely expressed; predominantly expressed in epithelial cells in the skin, respiratory, digestive, urinary and reproductive systems, retina, adrenal gland and various brain regions. In the adrenal gland, expressed in parenchymal cells of the cortex and in ganglionic cells and intermingled cortical cells of the medulla. Expressed in the type I glomic cells within the carotid body (at protein level). Widely expressed. Strongly expressed in esophagus, liver, pancreas, kidney, brain, hypothalamus, thyroid and ovary. Expressed in the zona glomerulosa (ZG) and zona fasciculata/reticularis (ZF/R) of the adrenal gland. Also expressed in stomach, lung, skeletal muscle, heart, uterus, spleen, adrenal gland and testis. Weakly expressed in small intestine, thymus, urinary bladder and adenohypophysis. In the brain, is expressed in the Barrington's nucleus, with lesser amount in the ventrolateral caudal periaqueductal gray (PAG) and in the mesopontine tegmentum.

It is found in the secreted. Its subcellular location is the extracellular space. The protein resides in the cytoplasmic vesicle. It localises to the secretory vesicle. Functionally, plays a role as a central modulator of cardiovascular and renal function and nociception. Also plays a role in energy metabolism and storage. Inhibits adrenocortical cell proliferation with minor stimulation on corticosteroid release. Acts as a ligand for galanin receptors GALR2 and GALR3. Intracerebroventricular administration of the peptide induces an increase in arterial blood pressure, a decrease in both heart rate and renal excretion and delayed natriuresis. Intraventricular administration of the peptide induces antinociceptive activity. Intraperitoneal administration of the peptide induces a reduction in food consumption and body weight. Inhibits long chain fatty acid uptake into adipocytes. Also induces contraction of muscarinic-like stomach smooth muscles. Its function is as follows. Intracerebroventricular administration of the peptide induces a decrease in heart rate, but no change in arterial pressure, and an increase in urine flow rate. Intraventricular administration of the peptide induces antinociceptive activity. The protein is Spexin (SPX) of Rattus norvegicus (Rat).